A 251-amino-acid chain; its full sequence is Spermatogenesis-associated protein 46 (251 aa).

The protein localises to the nucleus membrane. Its function is as follows. Plays a role in spermiogenesis and fertilization. The polypeptide is Spermatogenesis-associated protein 46 (SPATA46) (Macaca fascicularis (Crab-eating macaque)).